A 222-amino-acid polypeptide reads, in one-letter code: Charged multivesicular body protein 3 (222 aa).

Glycine 2 is lipidated: N-myristoyl glycine. The segment at 2 to 113 (GLFGKTQEKP…LQKSTEVMKA (112 aa)) is intramolecular interaction with C-terminus. Positions 22–54 (KIRKEMRVVDRQIRDIQREEEKVKRSVKDAAKK) form a coiled coil. 2 important for autoinhibitory function regions span residues 59 to 64 (VCVVLA) and 168 to 169 (IL). Residues 141–222 (EEMLEDTFES…MQSRLATLRS (82 aa)) are a coiled coil. Residues 151 to 220 (MDDQEEMEEE…EAMQSRLATL (70 aa)) are intramolecular interaction with N-terminus. The tract at residues 151 to 222 (MDDQEEMEEE…MQSRLATLRS (72 aa)) is interaction with VPS4A. Lysine 179 participates in a covalent cross-link: Glycyl lysine isopeptide (Lys-Gly) (interchain with G-Cter in ubiquitin). The segment at 180–222 (APSKVTDALPEPEPSGAMAASEDEEEEEEALEAMQSRLATLRS) is disordered. Interaction with STAMBP regions lie at residues 196–222 (AMAA…TLRS), 203–207 (EEEEE), and 221–222 (RS). Serine 200 bears the Phosphoserine mark. The span at 200-210 (SEDEEEEEEAL) shows a compositional bias: acidic residues. An MIT-interacting motif motif is present at residues 201 to 211 (EDEEEEEEALE).

This sequence belongs to the SNF7 family. As to quaternary structure, probable core component of the endosomal sorting required for transport complex III (ESCRT-III). ESCRT-III components are thought to multimerize to form a flat lattice on the perimeter membrane of the endosome. Several assembly forms of ESCRT-III may exist that interact and act sequentially. Forms a metastable monomer in solution; its core structure (without part of the putative autoinhibitory C-terminal acidic region) oligomerizes into a flat lattice via two different dimerization interfaces. In vitro, heteromerizes with CHMP2A (but not CHMP4) to form helical tubular structures that expose membrane-interacting sites on the outside whereas VPS4B can associate on the inside of the tubule. May interact with IGFBP7; the relevance of such interaction however remains unclear. Interacts with CHMP2A. Interacts with CHMP4A; the interaction requires the release of CHMP4A autoinhibition. Interacts with VPS4A. Interacts with STAMBP; the interaction appears to relieve the autoinhibition of CHMP3. Interacts with VTA1.

The protein resides in the cytoplasm. It is found in the cytosol. Its subcellular location is the membrane. It localises to the endosome. The protein localises to the late endosome membrane. Its function is as follows. Probable core component of the endosomal sorting required for transport complex III (ESCRT-III) which is involved in multivesicular bodies (MVBs) formation and sorting of endosomal cargo proteins into MVBs. MVBs contain intraluminal vesicles (ILVs) that are generated by invagination and scission from the limiting membrane of the endosome and mostly are delivered to lysosomes enabling degradation of membrane proteins, such as stimulated growth factor receptors, lysosomal enzymes and lipids. The MVB pathway appears to require the sequential function of ESCRT-O, -I,-II and -III complexes. ESCRT-III proteins mostly dissociate from the invaginating membrane before the ILV is released. The ESCRT machinery also functions in topologically equivalent membrane fission events, such as the terminal stages of cytokinesis and the budding of enveloped viruses (lentiviruses). ESCRT-III proteins are believed to mediate the necessary vesicle extrusion and/or membrane fission activities, possibly in conjunction with the AAA ATPase VPS4. Selectively binds to phosphatidylinositol 3,5-bisphosphate PtdIns(3,5)P2 and PtdIns(3,4)P2 in preference to other phosphoinositides tested. Involved in late stages of cytokinesis. Plays a role in endosomal sorting/trafficking of EGF receptor. The polypeptide is Charged multivesicular body protein 3 (CHMP3) (Pongo abelii (Sumatran orangutan)).